The sequence spans 227 residues: Cytochrome c oxidase subunit 2 (227 aa).

The Mitochondrial intermembrane portion of the chain corresponds to 1-14; it reads MAYPMQLGFQDATS. Residues 15 to 45 form a helical membrane-spanning segment; that stretch reads PIMEELLHFHDHTLMIVFLISSLVLYIISLM. Topologically, residues 46–59 are mitochondrial matrix; it reads LTTKLTHTSTMDAQ. The helical transmembrane segment at 60–87 threads the bilayer; that stretch reads EVETIWTILPAIILILIALPSLRILYMM. The Mitochondrial intermembrane portion of the chain corresponds to 88-227; that stretch reads DEINNPSLTV…YFEKWSASML (140 aa). Cu cation contacts are provided by His-161, Cys-196, Glu-198, Cys-200, His-204, and Met-207. Glu-198 provides a ligand contact to Mg(2+). Residue Tyr-218 is modified to Phosphotyrosine.

Belongs to the cytochrome c oxidase subunit 2 family. In terms of assembly, component of the cytochrome c oxidase (complex IV, CIV), a multisubunit enzyme composed of 14 subunits. The complex is composed of a catalytic core of 3 subunits MT-CO1, MT-CO2 and MT-CO3, encoded in the mitochondrial DNA, and 11 supernumerary subunits COX4I, COX5A, COX5B, COX6A, COX6B, COX6C, COX7A, COX7B, COX7C, COX8 and NDUFA4, which are encoded in the nuclear genome. The complex exists as a monomer or a dimer and forms supercomplexes (SCs) in the inner mitochondrial membrane with NADH-ubiquinone oxidoreductase (complex I, CI) and ubiquinol-cytochrome c oxidoreductase (cytochrome b-c1 complex, complex III, CIII), resulting in different assemblies (supercomplex SCI(1)III(2)IV(1) and megacomplex MCI(2)III(2)IV(2)). Found in a complex with TMEM177, COA6, COX18, COX20, SCO1 and SCO2. Interacts with TMEM177 in a COX20-dependent manner. Interacts with COX20. Interacts with COX16. Cu cation is required as a cofactor.

It localises to the mitochondrion inner membrane. The enzyme catalyses 4 Fe(II)-[cytochrome c] + O2 + 8 H(+)(in) = 4 Fe(III)-[cytochrome c] + 2 H2O + 4 H(+)(out). Functionally, component of the cytochrome c oxidase, the last enzyme in the mitochondrial electron transport chain which drives oxidative phosphorylation. The respiratory chain contains 3 multisubunit complexes succinate dehydrogenase (complex II, CII), ubiquinol-cytochrome c oxidoreductase (cytochrome b-c1 complex, complex III, CIII) and cytochrome c oxidase (complex IV, CIV), that cooperate to transfer electrons derived from NADH and succinate to molecular oxygen, creating an electrochemical gradient over the inner membrane that drives transmembrane transport and the ATP synthase. Cytochrome c oxidase is the component of the respiratory chain that catalyzes the reduction of oxygen to water. Electrons originating from reduced cytochrome c in the intermembrane space (IMS) are transferred via the dinuclear copper A center (CU(A)) of subunit 2 and heme A of subunit 1 to the active site in subunit 1, a binuclear center (BNC) formed by heme A3 and copper B (CU(B)). The BNC reduces molecular oxygen to 2 water molecules using 4 electrons from cytochrome c in the IMS and 4 protons from the mitochondrial matrix. This Syncerus caffer (African buffalo) protein is Cytochrome c oxidase subunit 2 (MT-CO2).